The sequence spans 229 residues: Clathrin light chain B (229 aa).

Composition is skewed to low complexity over residues Met-1–Glu-17 and Gly-45–Gly-58. The disordered stretch occupies residues Met-1–Ala-80. Phosphoserine occurs at positions 11 and 13. Residues Ala-93 to Arg-155 form an involved in binding clathrin heavy chain region. Thr-187 carries the phosphothreonine modification. A disulfide bridge connects residues Cys-199 and Cys-209. Lys-204 carries the post-translational modification N6-acetyllysine. A Phosphoserine modification is found at Ser-217.

This sequence belongs to the clathrin light chain family. Clathrin coats are formed from molecules containing 3 heavy chains and 3 light chains. Interacts (via N-terminus) with HIP1. Interacts with HIP1R.

The protein resides in the cytoplasmic vesicle membrane. It localises to the membrane. It is found in the coated pit. Clathrin is the major protein of the polyhedral coat of coated pits and vesicles. In Rattus norvegicus (Rat), this protein is Clathrin light chain B (Cltb).